We begin with the raw amino-acid sequence, 1154 residues long: Chromosome partition protein Smc (1154 aa).

32–39 (PNGCGKSN) provides a ligand contact to ATP. 3 coiled-coil regions span residues 170–215 (VAGL…ARQA), 282–505 (LREA…LNGE), and 627–993 (AARR…EARE).

It belongs to the SMC family. In terms of assembly, homodimer.

It is found in the cytoplasm. Its function is as follows. Required for chromosome condensation and partitioning. This Rhodopseudomonas palustris (strain ATCC BAA-98 / CGA009) protein is Chromosome partition protein Smc.